The sequence spans 347 residues: NADH-ubiquinone oxidoreductase chain 2 (347 aa).

11 consecutive transmembrane segments (helical) span residues serine 2–isoleucine 22, histidine 25–threonine 45, alanine 56–phenylalanine 76, phenylalanine 96–proline 116, isoleucine 122–phenylalanine 142, leucine 149–glycine 169, isoleucine 178–tyrosine 197, isoleucine 202–leucine 219, methionine 241–methionine 261, leucine 278–tyrosine 298, and isoleucine 323–phenylalanine 343.

This sequence belongs to the complex I subunit 2 family. Core subunit of respiratory chain NADH dehydrogenase (Complex I) which is composed of 45 different subunits. Interacts with TMEM242.

It localises to the mitochondrion inner membrane. The enzyme catalyses a ubiquinone + NADH + 5 H(+)(in) = a ubiquinol + NAD(+) + 4 H(+)(out). Its function is as follows. Core subunit of the mitochondrial membrane respiratory chain NADH dehydrogenase (Complex I) which catalyzes electron transfer from NADH through the respiratory chain, using ubiquinone as an electron acceptor. Essential for the catalytic activity and assembly of complex I. The sequence is that of NADH-ubiquinone oxidoreductase chain 2 from Metachirus nudicaudatus (Brown four-eyed opossum).